A 182-amino-acid polypeptide reads, in one-letter code: UPF0397 protein VS_II0189 (182 aa).

A run of 5 helical transmembrane segments spans residues 8–28 (VVVIAIGAALYGIGGLPMFGV), 41–61 (AVLALFSVLFGPIVGFLVGFI), 72–92 (WGVWLTWVLGSGIVGMVIGLF), 110–130 (FALFVVLALAGNVVGYGSSAF), and 146–166 (QLSIIAAGNTILIAVVGFLIL).

This sequence belongs to the UPF0397 family.

The protein localises to the cell membrane. The sequence is that of UPF0397 protein VS_II0189 from Vibrio atlanticus (strain LGP32) (Vibrio splendidus (strain Mel32)).